The chain runs to 221 residues: Cysteine-rich venom protein (221 aa).

Residue Gly-1 is a signal peptide. The SCP domain occupies 21–148; sequence DLHNSLRRSV…EYKYFYVCQY (128 aa). 8 disulfides stabilise this stretch: Cys-57–Cys-135, Cys-74–Cys-149, Cys-130–Cys-146, Cys-168–Cys-175, Cys-171–Cys-180, Cys-184–Cys-216, Cys-193–Cys-210, and Cys-201–Cys-214. A ShKT domain is found at 184 to 216; sequence CTHEDKFTNCKDLVKQGCNNNYLKTNCPASCSC.

It belongs to the CRISP family. As to expression, expressed by the venom gland.

Its subcellular location is the secreted. Functionally, blocks contraction of smooth muscle elicited by high potassium-induced depolarization, but does not block caffeine-stimulated contraction. May target voltage-gated calcium channels in smooth muscle. The sequence is that of Cysteine-rich venom protein from Vipera nikolskii (Nikolsky's adder).